We begin with the raw amino-acid sequence, 296 residues long: Phosphatidylglycerol--prolipoprotein diacylglyceryl transferase (296 aa).

The next 3 membrane-spanning stretches (helical) occupy residues 17–37, 59–79, and 97–117; these read LAVR…IVVG, MMFY…VLFY, and GGMS…LFAW. Arg142 provides a ligand contact to a 1,2-diacyl-sn-glycero-3-phospho-(1'-sn-glycerol). The next 2 membrane-spanning stretches (helical) occupy residues 230 to 250 and 257 to 277; these read MGAV…TVEF and FLGL…PMIL.

This sequence belongs to the Lgt family.

Its subcellular location is the cell inner membrane. The catalysed reaction is L-cysteinyl-[prolipoprotein] + a 1,2-diacyl-sn-glycero-3-phospho-(1'-sn-glycerol) = an S-1,2-diacyl-sn-glyceryl-L-cysteinyl-[prolipoprotein] + sn-glycerol 1-phosphate + H(+). It functions in the pathway protein modification; lipoprotein biosynthesis (diacylglyceryl transfer). Catalyzes the transfer of the diacylglyceryl group from phosphatidylglycerol to the sulfhydryl group of the N-terminal cysteine of a prolipoprotein, the first step in the formation of mature lipoproteins. This is Phosphatidylglycerol--prolipoprotein diacylglyceryl transferase from Burkholderia lata (strain ATCC 17760 / DSM 23089 / LMG 22485 / NCIMB 9086 / R18194 / 383).